Here is a 1179-residue protein sequence, read N- to C-terminus: Calcium-activated potassium channel subunit alpha-1 (1179 aa).

The segment covering Met-1–Gly-24 has biased composition (gly residues). Positions Met-1–Val-62 are disordered. The Extracellular portion of the chain corresponds to Met-1–Met-87. Residues Ser-41–Ser-61 are compositionally biased toward low complexity. The chain crosses the membrane as a helical span at residues Trp-88 to Leu-108. Residues Trp-109–Arg-179 lie on the Cytoplasmic side of the membrane. Residues Cys-119, Cys-120, and Cys-122 are each lipidated (S-palmitoyl cysteine). A helical membrane pass occupies residues Val-180 to Ser-200. Residues Ser-201–Thr-215 lie on the Extracellular side of the membrane. The helical transmembrane segment at Leu-216–Ala-236 threads the bilayer. The Cytoplasmic portion of the chain corresponds to Ala-237 to Lys-240. Residues Leu-241–Val-261 traverse the membrane as a helical segment. Over Ser-262 to Leu-265 the chain is Extracellular. Residues Asn-266–Ile-286 traverse the membrane as a helical; Voltage-sensor segment. Residues Leu-287–Leu-301 lie on the Cytoplasmic side of the membrane. A helical membrane pass occupies residues Val-302–Val-322. Residues Glu-323–Gln-336 lie on the Extracellular side of the membrane. The segment at residues Ala-337–Val-359 is an intramembrane region (pore-forming). The short motif at Thr-353–Tyr-356 is the Selectivity for potassium element. Over Tyr-360–Leu-368 the chain is Extracellular. The helical transmembrane segment at Phe-369–Ile-389 threads the bilayer. Residues Glu-390–Leu-1179 are Cytoplasmic-facing. In terms of domain architecture, RCK N-terminal 1 spans Arg-408 to Ile-550. Residues Glu-440, Gln-463, and Glu-465 each contribute to the Mg(2+) site. The segment at Leu-557 to Phe-577 is segment S7. The segment at Leu-614 to Ile-634 is segment S8. The segment at Cys-678–His-682 is heme-binding motif. Residues Glu-702–Arg-730 are disordered. Thr-706 carries the post-translational modification Phosphothreonine. Ser-708, Ser-721, and Ser-725 each carry phosphoserine. The tract at residues Val-780–Leu-800 is segment S9. An RCK N-terminal 2 domain is found at Ser-782–Pro-926. Position 913 is a phosphothreonine (Thr-913). Phosphoserine occurs at positions 921 and 925. The Calcium bowl signature appears at Thr-946–Glu-968. Gln-955, Asp-958, Asp-961, and Asp-963 together coordinate Ca(2+). Residues Phe-975–Phe-995 are segment S10. Over residues Arg-1129–Ser-1154 the composition is skewed to low complexity. Positions Arg-1129 to Leu-1179 are disordered. Over residues Lys-1163–Leu-1179 the composition is skewed to basic and acidic residues. Ser-1164 and Ser-1167 each carry phosphoserine.

It belongs to the potassium channel family. Calcium-activated (TC 1.A.1.3) subfamily. KCa1.1/KCNMA1 sub-subfamily. As to quaternary structure, homotetramer; which constitutes the calcium-activated potassium channel. Interacts with beta subunits KCNMB1, KCNMB2, KCNMB3 and KCNMB4. Interacts with gamma subunits LRRC26, LRRC38, LRRC52 and LRRC55. Beta and gamma subunits are accessory, and modulate its activity. Interacts with RAB11B. Post-translationally, phosphorylated. Phosphorylation by kinases such as PKA and/or PKG. In smooth muscles, phosphorylation affects its activity. In terms of processing, palmitoylation by ZDHHC22 and ZDHHC23 within the intracellular linker between the S0 and S1 transmembrane domains regulates localization to the plasma membrane. Depalmitoylated by LYPLA1 and LYPLAL1, leading to retard exit from the trans-Golgi network.

The protein localises to the cell membrane. It is found in the endoplasmic reticulum membrane. The catalysed reaction is K(+)(in) = K(+)(out). Its activity is regulated as follows. Ethanol and carbon monoxide-bound heme increase channel activation. Heme inhibits channel activation. Potassium channel activated by both membrane depolarization or increase in cytosolic Ca(2+) that mediates export of K(+). It is also activated by the concentration of cytosolic Mg(2+). Its activation dampens the excitatory events that elevate the cytosolic Ca(2+) concentration and/or depolarize the cell membrane. It therefore contributes to repolarization of the membrane potential. Plays a key role in controlling excitability in a number of systems, such as regulation of the contraction of smooth muscle, the tuning of hair cells in the cochlea, regulation of transmitter release, and innate immunity. In smooth muscles, its activation by high level of Ca(2+), caused by ryanodine receptors in the sarcoplasmic reticulum, regulates the membrane potential. In cochlea cells, its number and kinetic properties partly determine the characteristic frequency of each hair cell and thereby helps to establish a tonotopic map. Kinetics of KCNMA1 channels are determined by alternative splicing, phosphorylation status and its combination with modulating beta subunits. Highly sensitive to both iberiotoxin (IbTx) and charybdotoxin (CTX). Its function is as follows. Potassium channel activated by both membrane depolarization or increase in cytosolic Ca(2+) that mediates export of K(+). This chain is Calcium-activated potassium channel subunit alpha-1 (KCNMA1), found in Oryctolagus cuniculus (Rabbit).